We begin with the raw amino-acid sequence, 379 residues long: Cytochrome b (379 aa).

A run of 4 helical transmembrane segments spans residues 33–53 (FGSLLGACLTIQIITGLFLAM), 77–98 (WTIRYLHANGASMFFLCLFIHV), 113–133 (WNVGIILLFSVMATAFMGYVL), and 178–198 (FFALHFILPFIISALVMIHLL). Residues His-83 and His-97 each contribute to the heme b site. The heme b site is built by His-182 and His-196. A ubiquinone is bound at residue His-201. Transmembrane regions (helical) follow at residues 226–246 (TKDFLGLLLLTLLLMTMALFY), 288–308 (LGGVMALILSILILMVIPFLQ), 320–340 (LSQFLFWILVADLLTLTWIGG), and 347–367 (FINIGQMASMLYFSLMVFIMP).

This sequence belongs to the cytochrome b family. In terms of assembly, the cytochrome bc1 complex contains 11 subunits: 3 respiratory subunits (MT-CYB, CYC1 and UQCRFS1), 2 core proteins (UQCRC1 and UQCRC2) and 6 low-molecular weight proteins (UQCRH/QCR6, UQCRB/QCR7, UQCRQ/QCR8, UQCR10/QCR9, UQCR11/QCR10 and a cleavage product of UQCRFS1). This cytochrome bc1 complex then forms a dimer. Heme b is required as a cofactor.

It is found in the mitochondrion inner membrane. Functionally, component of the ubiquinol-cytochrome c reductase complex (complex III or cytochrome b-c1 complex) that is part of the mitochondrial respiratory chain. The b-c1 complex mediates electron transfer from ubiquinol to cytochrome c. Contributes to the generation of a proton gradient across the mitochondrial membrane that is then used for ATP synthesis. The sequence is that of Cytochrome b (MT-CYB) from Lepilemur dorsalis (Grey-backed sportive lemur).